Reading from the N-terminus, the 179-residue chain is ATP synthase subunit delta (179 aa).

It belongs to the ATPase delta chain family. In terms of assembly, F-type ATPases have 2 components, F(1) - the catalytic core - and F(0) - the membrane proton channel. F(1) has five subunits: alpha(3), beta(3), gamma(1), delta(1), epsilon(1). F(0) has three main subunits: a(1), b(2) and c(10-14). The alpha and beta chains form an alternating ring which encloses part of the gamma chain. F(1) is attached to F(0) by a central stalk formed by the gamma and epsilon chains, while a peripheral stalk is formed by the delta and b chains.

Its subcellular location is the cell inner membrane. F(1)F(0) ATP synthase produces ATP from ADP in the presence of a proton or sodium gradient. F-type ATPases consist of two structural domains, F(1) containing the extramembraneous catalytic core and F(0) containing the membrane proton channel, linked together by a central stalk and a peripheral stalk. During catalysis, ATP synthesis in the catalytic domain of F(1) is coupled via a rotary mechanism of the central stalk subunits to proton translocation. Functionally, this protein is part of the stalk that links CF(0) to CF(1). It either transmits conformational changes from CF(0) to CF(1) or is implicated in proton conduction. This is ATP synthase subunit delta from Bordetella petrii (strain ATCC BAA-461 / DSM 12804 / CCUG 43448).